Reading from the N-terminus, the 166-residue chain is Ribosome maturation factor RimP (166 aa).

This sequence belongs to the RimP family.

The protein resides in the cytoplasm. Its function is as follows. Required for maturation of 30S ribosomal subunits. The chain is Ribosome maturation factor RimP from Rickettsia akari (strain Hartford).